The sequence spans 122 residues: Large ribosomal subunit protein uL14 (122 aa).

It belongs to the universal ribosomal protein uL14 family. Part of the 50S ribosomal subunit. Forms a cluster with proteins L3 and L19. In the 70S ribosome, L14 and L19 interact and together make contacts with the 16S rRNA in bridges B5 and B8.

Its function is as follows. Binds to 23S rRNA. Forms part of two intersubunit bridges in the 70S ribosome. The sequence is that of Large ribosomal subunit protein uL14 from Streptococcus uberis (strain ATCC BAA-854 / 0140J).